Here is a 342-residue protein sequence, read N- to C-terminus: Large ribosomal subunit protein uL3 (342 aa).

It belongs to the universal ribosomal protein uL3 family. In terms of assembly, part of the 50S ribosomal subunit. Forms a cluster with proteins L14 and L24e.

Functionally, one of the primary rRNA binding proteins, it binds directly near the 3'-end of the 23S rRNA, where it nucleates assembly of the 50S subunit. This is Large ribosomal subunit protein uL3 from Pyrobaculum islandicum (strain DSM 4184 / JCM 9189 / GEO3).